The chain runs to 684 residues: DNA gyrase subunit B, novobiocin-sensitive (684 aa).

Residues 1-22 (MADSGNPNENTPSVATGENGEV) form a disordered region. The tract at residues 154–302 (VKTDGYRWTQ…RMLSVEIAMQ (149 aa)) is novobiocin-binding. The Toprim domain maps to 463-577 (CEIFIVEGDS…AGHVYLSRPP (115 aa)). Mg(2+) is bound by residues E469, D542, and D544.

The protein belongs to the type II topoisomerase GyrB family. Heterotetramer, composed of two GyrA and two GyrB chains. In the heterotetramer, GyrA contains the active site tyrosine that forms a transient covalent intermediate with DNA, while GyrB binds cofactors and catalyzes ATP hydrolysis. It depends on Mg(2+) as a cofactor. The cofactor is Mn(2+). Ca(2+) serves as cofactor.

The protein localises to the cytoplasm. The enzyme catalyses ATP-dependent breakage, passage and rejoining of double-stranded DNA.. In terms of biological role, a type II topoisomerase that negatively supercoils closed circular double-stranded (ds) DNA in an ATP-dependent manner to modulate DNA topology and maintain chromosomes in an underwound state. Negative supercoiling favors strand separation, and DNA replication, transcription, recombination and repair, all of which involve strand separation. Also able to catalyze the interconversion of other topological isomers of dsDNA rings, including catenanes and knotted rings. Type II topoisomerases break and join 2 DNA strands simultaneously in an ATP-dependent manner. The chain is DNA gyrase subunit B, novobiocin-sensitive from Streptomyces niveus (Streptomyces spheroides).